We begin with the raw amino-acid sequence, 215 residues long: HTH-type transcriptional regulator for conjugative element R391 (215 aa).

Positions 8-61 constitute an HTH cro/C1-type domain; it reads LNHALQLTGVTQSELARRIGIKQQSISQICSGKSARSRYTMQIAEALRVNAHWL. A DNA-binding region (H-T-H motif) is located at residues 19–38; that stretch reads QSELARRIGIKQQSISQICS.

May control the expression of the integrase and inhibit excision of the mobile element R391, and regulate the expression of other genes as well. The chain is HTH-type transcriptional regulator for conjugative element R391 from Providencia rettgeri.